The sequence spans 59 residues: U-limacoditoxin(3)-Dv33 (59 aa).

The signal sequence occupies residues 1–19 (MSKVILLCLIFALFACSIS).

Belongs to the limacoditoxin-3 family. The natural peptide is not amidated. The recombinant peptide is amidated. Expressed by the venom secretory cell of the spine. The spine is a cuticular structure containing a single large nucleated venom-secreting cell at its base. It is an independent unit capable of producing, storing and injecting venom. On the back of D.vulnerans caterpillars, spines are grouped together by 50 to 100 to form scoli, of which there are eight in D.vulnerans.

The protein localises to the secreted. Functionally, probable toxin. Shows a relatively potent antiparasitic activity against the major pathogenic nematode of ruminants (H.contortus, EC(50)=2.6 uM). Does not show insecticidal and antimicrobial activities. Does not induce increase in intracellular calcium in mouse DRG neurons, suggesting that it does not induce pain. The polypeptide is U-limacoditoxin(3)-Dv33 (Doratifera vulnerans (Mottled cup moth)).